The chain runs to 604 residues: uncharacterized protein (604 aa).

Residues 239–259 are disordered; the sequence is ELNSPQELNDPQELNNSQDLN.

This is an uncharacterized protein from Escherichia coli (strain K12).